The sequence spans 2345 residues: Nonribisomal peptide synthetase malG (2345 aa).

The interval phenylalanine 226–valine 620 is adenylation 1. The Carrier 1 domain maps to threonine 766 to glycine 839. Serine 800 is subject to O-(pantetheine 4'-phosphoryl)serine. The condensation 1 stretch occupies residues glutamate 877–leucine 1292. The adenylation 2 stretch occupies residues valine 1317–arginine 1707. The Carrier 2 domain occupies glutamine 1843–lysine 1926. Position 1885 is an O-(pantetheine 4'-phosphoryl)serine (serine 1885). A reductase (R) domain region spans residues glycine 1969 to glutamate 2256.

It belongs to the NRP synthetase family.

It carries out the reaction L-proline + L-tryptophan + 2 ATP + NADPH = (S)-3-(indol-3-ylmethyl)-6,7,8,8a-tetrahydropyrrolo[1,2-a]pyrazin-1-one + 2 AMP + 2 diphosphate + NADP(+) + H2O + H(+). Nonribisomal peptide synthetase; part of the gene cluster that mediates the biosynthesis of malbrancheamide, a dichlorinated fungal indole alkaloid that belongs to a family of natural products containing a characteristic bicyclo[2.2.2]diazaoctane core. The first step of malbrancheamide biosynthesis involves coupling of L-proline and L-tryptophan by malG, a bimodular NRPS, to produce L-Pro-L-Trp aldehyde through reductive offloading. This compound undergoes spontaneous cyclization and dehydration to give a dienamine which is reverse prenylated at C-2 by malE. The other prenyltransferase present in the cluster, malB, displays modest activity, suggesting that may be a redundant gene in the pathway. Subsequently, a [4+2] Diels-Alder cyclo-addition catalyzed by the bifunctional enzyme malC forms the characteristic bicyclo[2.2.2]diazaoctane ring of premalbrancheamid. Finally, the flavin-dependent halogenase malA catalyzes the iterative dichlorination of the indole ring of premalbrancheamide to yield C-9 monochlorinated malbrancheamide B, C-8 monochlorinated isomalbrancheamide B, and dichlorinated malbrancheamide. MalA is also able to brominate premalbrancheamide at C-9 to yield malbrancheamide C, and, to a lesser extend, at C-8 to yield isomalbrancheamide C. Finally, malA can brominate C-9 monochlorinated malbrancheamide B at C-8 to yield malbrancheamide D, or C-8 monochlorinated isomalbrancheamide B at C-9 to produce isomalbrancheamide D. This chain is Nonribisomal peptide synthetase malG, found in Malbranchea aurantiaca.